The following is a 271-amino-acid chain: uncharacterized protein (271 aa).

This is an uncharacterized protein from Saccharomyces cerevisiae (strain ATCC 204508 / S288c) (Baker's yeast).